The chain runs to 121 residues: Protein TCL1B5 (121 aa).

It belongs to the TCL1 family.

The polypeptide is Protein TCL1B5 (Tcl1b5) (Mus musculus (Mouse)).